The chain runs to 87 residues: Chromosomal protein MC1b (87 aa).

Its function is as follows. Protects DNA against thermal denaturation and modulates transcription. This Methanothrix soehngenii (Methanosaeta concilii) protein is Chromosomal protein MC1b.